The following is a 157-amino-acid chain: Cell number regulator 10 (157 aa).

The next 2 helical transmembrane spans lie at 41–57 (DCGLCCLTCWCPCITFG) and 66–83 (GATSCGTAGALYAVLAYF).

It belongs to the cornifelin family. As to expression, expressed in roots, leaves, stalks, immature ears and silks.

The protein localises to the membrane. This is Cell number regulator 10 (CNR10) from Zea mays (Maize).